The sequence spans 340 residues: tRNA N6-adenosine threonylcarbamoyltransferase (340 aa).

Residues histidine 111 and histidine 115 each contribute to the Fe cation site. Substrate contacts are provided by residues 134–138, aspartate 167, glycine 180, and asparagine 276; that span reads LVSGG. Residue aspartate 304 coordinates Fe cation.

Belongs to the KAE1 / TsaD family. It depends on Fe(2+) as a cofactor.

It localises to the cytoplasm. The catalysed reaction is L-threonylcarbamoyladenylate + adenosine(37) in tRNA = N(6)-L-threonylcarbamoyladenosine(37) in tRNA + AMP + H(+). In terms of biological role, required for the formation of a threonylcarbamoyl group on adenosine at position 37 (t(6)A37) in tRNAs that read codons beginning with adenine. Is involved in the transfer of the threonylcarbamoyl moiety of threonylcarbamoyl-AMP (TC-AMP) to the N6 group of A37, together with TsaE and TsaB. TsaD likely plays a direct catalytic role in this reaction. The polypeptide is tRNA N6-adenosine threonylcarbamoyltransferase (Helicobacter pylori (strain ATCC 700392 / 26695) (Campylobacter pylori)).